A 568-amino-acid chain; its full sequence is SLAIN motif-containing protein 1 (568 aa).

Disordered stretches follow at residues 1–22 (MMAE…SGPV), 59–92 (LLLL…TAAA), 139–162 (GGGP…SPPP), 235–256 (YTSR…STSE), and 291–403 (STSA…LRRS). Positions 21-56 (PVVNAELEVKKLQELVRKLEKQNEQLRSRAASAAAA) form a coiled coil. Pro residues predominate over residues 62–74 (LPPPPPAAPPPAG). The segment covering 75-92 (LQPLGPRSPPAATATAAA) has biased composition (low complexity). Residues 139–149 (GGGPEPGGAGT) are compositionally biased toward gly residues. Residues 235–245 (YTSRGSPLSPQ) are compositionally biased toward polar residues. S243 bears the Phosphoserine mark. 2 stretches are compositionally biased toward low complexity: residues 246–255 (SSIDSELSTS) and 291–307 (STSA…SLSS). Positions 316–329 (QEYDQYSLEDEEEF) are enriched in acidic residues. Over residues 366–384 (SSQYFPSNNYQQQQYYSPQ) the composition is skewed to low complexity. A compositionally biased stretch (polar residues) spans 385–395 (AQTPDQQPNRT). 2 positions are modified to asymmetric dimethylarginine: R471 and R543.

This sequence belongs to the SLAIN motif-containing family. Interacts with MAPRE1, MAPRE2, MAPRE3 and CKAP5. Interacts with ZDHHC17 (via ANK repeats). Expressed in embryonic stem cells. Expressed in brain.

Its subcellular location is the cytoplasm. It is found in the cytoskeleton. In terms of biological role, microtubule plus-end tracking protein that might be involved in the regulation of cytoplasmic microtubule dynamics, microtubule organization and microtubule elongation. The chain is SLAIN motif-containing protein 1 (SLAIN1) from Homo sapiens (Human).